Reading from the N-terminus, the 802-residue chain is Endoplasmin (802 aa).

Residues 1 to 21 form the signal peptide; that stretch reads MRALWVLGLCCVLLTFGSARA. The SRT pseudosubstrate motif motif lies at 42-44; the sequence is SRT. An N-linked (GlcNAc...) asparagine glycan is attached at Asn-62. Ser-64 carries the post-translational modification Phosphoserine. N-linked (GlcNAc...) asparagine glycosylation is present at Asn-107. The ATP site is built by Asn-107, Asp-149, and Asn-162. At Lys-168 the chain carries N6-(2-hydroxyisobutyryl)lysine. At Ser-172 the chain carries Phosphoserine. ATP is bound at residue Phe-199. N-linked (GlcNAc...) asparagine glycosylation is present at Asn-217. The segment at 288-323 is disordered; sequence TVEEPAEEEEAAKEEKEEADDEAAVEEEEEEKKPKT. The span at 289–317 shows a compositional bias: acidic residues; the sequence is VEEPAEEEEAAKEEKEEADDEAAVEEEEE. Ser-403 carries the phosphoserine modification. An N6-succinyllysine modification is found at Lys-404. The N-linked (GlcNAc...) asparagine glycan is linked to Asn-445. Ser-447 is subject to Phosphoserine. Lys-479 is modified (N6-acetyllysine). Residues Asn-481 and Asn-502 are each glycosylated (N-linked (GlcNAc...) asparagine). Lys-633 carries the N6-succinyllysine modification. The tract at residues 750 to 802 is disordered; the sequence is DPDAKVEEEPEEEPEDTTEDTEQDEEEEMDAGTDEEEQEQEPEKKSTAEKDEL. The segment covering 757-789 has biased composition (acidic residues); that stretch reads EEPEEEPEDTTEDTEQDEEEEMDAGTDEEEQEQ. Thr-782 carries the post-translational modification Phosphothreonine. The span at 790-802 shows a compositional bias: basic and acidic residues; it reads EPEKKSTAEKDEL. A Prevents secretion from ER motif is present at residues 799–802; that stretch reads KDEL.

The protein belongs to the heat shock protein 90 family. Homodimer; disulfide-linked. Component of an EIF2 complex at least composed of CELF1/CUGBP1, CALR, CALR3, EIF2S1, EIF2S2, HSP90B1 and HSPA5. Part of a large chaperone multiprotein complex comprising DNAJB11, HSP90B1, HSPA5, HYOU, PDIA2, PDIA4, PDIA6, PPIB, SDF2L1, UGGT1 and very small amounts of ERP29, but not, or at very low levels, CALR nor CANX. Interacts with AIMP1; regulates its retention in the endoplasmic reticulum. Hyperglycosylated form interacts with OS9; promoting its degradation by the endoplasmic reticulum associated degradation (ERAD). Interacts with CNPY3. This interaction is disrupted in the presence of ATP. Interacts with TLR4 and TLR9, but not with TLR3. Interacts with MZB1 in a calcium-dependent manner. Interacts with METTL23. Interacts with IL1B; the interaction facilitates cargo translocation into the ERGIC. Interacts with EIF2AK3. Post-translationally, phosphorylated by CK2. In terms of processing, N-glycosylated cotranslationally at Asn-217 by STT3A-containing OST-A complex: this glycosylation is constitutive. In response to various stress, 5 additional facultative sites (Asn-62, Asn-107, Asn-445, Asn-481 and Asn-502) can be glycosylated post-translationally by STT3B-containing OST-B complex, leading to a hyperglycosylated form that is degraded by the ER-associated degradation (ERAD) pathway. In normal conditions, the OST-A complex together with CCDC134 prevent glycosylation at facultative sites during protein folding, thereby preventing hyperglycosylation. Mechanistically, nascent HSP90B1 is tethered during translation to a specialized CCDC134-containing translocon that forms a microenvironment for its folding, in which STT3A associates with the SRT pseudosubstrate motif, and prevents access to facultative glycosylation sites until folding is completed, rendering its facultative sites inaccessible to the OST-B complex.

It is found in the endoplasmic reticulum lumen. The protein resides in the sarcoplasmic reticulum lumen. Its subcellular location is the melanosome. The catalysed reaction is ATP + H2O = ADP + phosphate + H(+). Its function is as follows. ATP-dependent chaperone involved in the processing of proteins in the endoplasmic reticulum, regulating their transport. Together with MESD, acts as a modulator of the Wnt pathway by promoting the folding of LRP6, a coreceptor of the canonical Wnt pathway. When associated with CNPY3, required for proper folding of Toll-like receptors. Promotes folding and trafficking of TLR4 to the cell surface. May participate in the unfolding of cytosolic leaderless cargos (lacking the secretion signal sequence) such as the interleukin 1/IL-1 to facilitate their translocation into the ERGIC (endoplasmic reticulum-Golgi intermediate compartment) and secretion; the translocation process is mediated by the cargo receptor TMED10. The polypeptide is Endoplasmin (HSP90B1) (Oryctolagus cuniculus (Rabbit)).